The primary structure comprises 325 residues: MENRLINPVERVDDSVDNNIRPSTLAEYIGQPVVREQMEVFIEAARRRNEALDHTLIFGPPGLGKTTLANIIAREMGGNLRSTSGPVLERAGDLAAMLTNLEEGDVLFIDEIHRLSPVIEEILYPAMEDFQLDIMIGEGPAARSIKLDLPPFTLVAATTRAGLLTSPLRDRFGIVQRLEFYNIEDLTTIVSRSARLMNVVMTPEGAVEVARRSRGTPRIANRLLRRVRDYAQVKSNGEVTGEIADSALDMLAVDRRGLDHLDRRYIEMVHARFDNGPAGVEAIAAAMAEDRGTLEDVIEPYLIQQGYVLRTARGRVLTQMAIDQL.

Residues 1–181 (MENRLINPVE…FGIVQRLEFY (181 aa)) form a large ATPase domain (RuvB-L) region. ATP-binding positions include isoleucine 20, arginine 21, glycine 62, lysine 65, threonine 66, threonine 67, 128–130 (EDF), arginine 171, tyrosine 181, and arginine 218. Threonine 66 provides a ligand contact to Mg(2+). Residues 182–252 (NIEDLTTIVS…IADSALDMLA (71 aa)) form a small ATPAse domain (RuvB-S) region. Residues 255–325 (RRGLDHLDRR…VLTQMAIDQL (71 aa)) are head domain (RuvB-H). Residues arginine 291, arginine 310, and arginine 315 each coordinate DNA.

The protein belongs to the RuvB family. Homohexamer. Forms an RuvA(8)-RuvB(12)-Holliday junction (HJ) complex. HJ DNA is sandwiched between 2 RuvA tetramers; dsDNA enters through RuvA and exits via RuvB. An RuvB hexamer assembles on each DNA strand where it exits the tetramer. Each RuvB hexamer is contacted by two RuvA subunits (via domain III) on 2 adjacent RuvB subunits; this complex drives branch migration. In the full resolvosome a probable DNA-RuvA(4)-RuvB(12)-RuvC(2) complex forms which resolves the HJ.

It is found in the cytoplasm. It catalyses the reaction ATP + H2O = ADP + phosphate + H(+). In terms of biological role, the RuvA-RuvB-RuvC complex processes Holliday junction (HJ) DNA during genetic recombination and DNA repair, while the RuvA-RuvB complex plays an important role in the rescue of blocked DNA replication forks via replication fork reversal (RFR). RuvA specifically binds to HJ cruciform DNA, conferring on it an open structure. The RuvB hexamer acts as an ATP-dependent pump, pulling dsDNA into and through the RuvAB complex. RuvB forms 2 homohexamers on either side of HJ DNA bound by 1 or 2 RuvA tetramers; 4 subunits per hexamer contact DNA at a time. Coordinated motions by a converter formed by DNA-disengaged RuvB subunits stimulates ATP hydrolysis and nucleotide exchange. Immobilization of the converter enables RuvB to convert the ATP-contained energy into a lever motion, pulling 2 nucleotides of DNA out of the RuvA tetramer per ATP hydrolyzed, thus driving DNA branch migration. The RuvB motors rotate together with the DNA substrate, which together with the progressing nucleotide cycle form the mechanistic basis for DNA recombination by continuous HJ branch migration. Branch migration allows RuvC to scan DNA until it finds its consensus sequence, where it cleaves and resolves cruciform DNA. This Psychrobacter sp. (strain PRwf-1) protein is Holliday junction branch migration complex subunit RuvB.